The primary structure comprises 1083 residues: DNA-directed RNA polymerase subunit beta (1083 aa).

The protein belongs to the RNA polymerase beta chain family. As to quaternary structure, in plastids the minimal PEP RNA polymerase catalytic core is composed of four subunits: alpha, beta, beta', and beta''. When a (nuclear-encoded) sigma factor is associated with the core the holoenzyme is formed, which can initiate transcription.

Its subcellular location is the plastid. The protein resides in the chloroplast. The catalysed reaction is RNA(n) + a ribonucleoside 5'-triphosphate = RNA(n+1) + diphosphate. DNA-dependent RNA polymerase catalyzes the transcription of DNA into RNA using the four ribonucleoside triphosphates as substrates. In Acorus calamus var. americanus (American sweet flag), this protein is DNA-directed RNA polymerase subunit beta.